The primary structure comprises 346 residues: MALMLSRIPRRFFFLFLTVGLIAGAFLYSLIYFVDVDLVSKVNQLYDQQIAPMLSDAIGTPSVNHSFELAPLDSHLVATSTTFHEASYESEPQQNPASQNIVLLLVSDGHTSYNNGANTFEEAIQNRVDYSTKQNYNFEYVNVTGLPIPAVWSKMPAVLQTMKKYPKAEWIWLLDQDAIITNTHLSLQDSFLKPENLQKTLITNTILTKRPINANGDLRYTPSNYSLKDIENLMVIISQDHNGLNAGSILFRNSPATALFLDIWTDPVVAECAKANNEQDMLGYLISKHSQLASLVGLIPQRKINAFHEGPENMEWQKGDLVIHFAGCWVENRCDELWQKFYALID.

Topologically, residues M1–R11 are cytoplasmic. The helical; Signal-anchor for type II membrane protein transmembrane segment at F12 to Y32 threads the bilayer. The Lumenal segment spans residues F33–D346. N-linked (GlcNAc...) asparagine glycans are attached at residues N64, N142, and N224.

Belongs to the glycosyltransferase 34 family.

It is found in the golgi apparatus membrane. The chain is Probable alpha-1,2-galactosyltransferase gmh2 (gmh2) from Schizosaccharomyces pombe (strain 972 / ATCC 24843) (Fission yeast).